Consider the following 307-residue polypeptide: Serine/threonine-protein phosphatase PP2A-2 catalytic subunit (307 aa).

Mn(2+) contacts are provided by aspartate 55, histidine 57, aspartate 83, and asparagine 115. Histidine 116 (proton donor) is an active-site residue. Positions 165 and 239 each coordinate Mn(2+).

Belongs to the PPP phosphatase family. PP-2A subfamily. Mn(2+) serves as cofactor.

The protein localises to the cytoplasm. The catalysed reaction is O-phospho-L-seryl-[protein] + H2O = L-seryl-[protein] + phosphate. The enzyme catalyses O-phospho-L-threonyl-[protein] + H2O = L-threonyl-[protein] + phosphate. The chain is Serine/threonine-protein phosphatase PP2A-2 catalytic subunit (PP2A2) from Oryza sativa subsp. indica (Rice).